Reading from the N-terminus, the 319-residue chain is ATP-dependent 6-phosphofructokinase (319 aa).

Glycine 11 is a binding site for ATP. 21–25 (RAVVR) contributes to the ADP binding site. Residues 72 to 73 (RC) and 102 to 105 (GDGS) contribute to the ATP site. Mg(2+) is bound at residue aspartate 103. Substrate is bound at residue 125–127 (TID). Aspartate 127 functions as the Proton acceptor in the catalytic mechanism. Arginine 154 provides a ligand contact to ADP. Substrate contacts are provided by residues arginine 162 and 169-171 (MGR). ADP is bound by residues 185–187 (GAE), arginine 211, and 213–215 (KKH). Substrate is bound by residues glutamate 222, arginine 243, and 249-252 (HIQR).

This sequence belongs to the phosphofructokinase type A (PFKA) family. ATP-dependent PFK group I subfamily. Prokaryotic clade 'B1' sub-subfamily. In terms of assembly, homotetramer. Mg(2+) is required as a cofactor.

Its subcellular location is the cytoplasm. The enzyme catalyses beta-D-fructose 6-phosphate + ATP = beta-D-fructose 1,6-bisphosphate + ADP + H(+). It participates in carbohydrate degradation; glycolysis; D-glyceraldehyde 3-phosphate and glycerone phosphate from D-glucose: step 3/4. With respect to regulation, allosterically activated by ADP and other diphosphonucleosides, and allosterically inhibited by phosphoenolpyruvate. Catalyzes the phosphorylation of D-fructose 6-phosphate to fructose 1,6-bisphosphate by ATP, the first committing step of glycolysis. The sequence is that of ATP-dependent 6-phosphofructokinase from Shouchella clausii (strain KSM-K16) (Alkalihalobacillus clausii).